The sequence spans 105 residues: Heat shock protein HspQ (105 aa).

The tract at residues 77–105 (MRDEHPEQPSMDELARTIRKQLQAPRLRN) is disordered.

This sequence belongs to the HspQ family.

It localises to the cytoplasm. Functionally, involved in the degradation of certain denaturated proteins, including DnaA, during heat shock stress. This is Heat shock protein HspQ from Salmonella arizonae (strain ATCC BAA-731 / CDC346-86 / RSK2980).